The following is a 1109-amino-acid chain: MARRGKKPVVRTLEDLTLDSGYGGAADSVRSSNLSLCCSDSHPASPYGGSCWPPLADSMHSRHNSFDTVNTALVEDSEGLDCAGQHCSRLLPDLDEVPWTLQELELLLLRSRDPRAGPAVPGSLPKDALAKLSMLVSRALVRIAKEAQRLSLRFAKCTKYEIQSAMEIVLSWGLAAHCTAAALAALSLYNMSSAGGDRLGRGKSARCGLTFSVGRVYRWMVDSRVALRIHEHAAIYLTACMESLFRDIYSRVLASGLPRSCSGPGPGSSSGSGPGPGSGPGAPAADKERETPGGGAASGGPCSAASSASGGSSCCAPPATAATAVPPTTATAAVAANHHHHHHTLHEAPKFTVETLEHTVNNDSEIWGLLQPYQHLICGKNASGVLSLPESLNLHRDPQRPSKPGELPMFSQSELRTIEQSLLATRVGSIAELSDLVSRAMHHLQPLNAKHHGNGTPMHHKQGALYWEPEALYTLCYFMHCPQMEWENPNVEPSKVNLQVERPFLVLPPLMEWIRVAVAHAGHRRSFSMDSDDVRQAARLLLPGVDCEPRQLKADDCFCASRKLDAVAIEAKFKQDLGFRMLNCGRTDLVKQAVSLLGPDGINTMSEQGMTPLMYACVRGDEAMVQMLLDAGADLNVEVVSTPHKYPSVHPETRHWTALTFAVLHGHIPVVQLLLDAGAKVEGSVEHGEENYSETPLQLAAAVGNFELVSLLLERGADPLIGTMYRNGISTTPQGDMNSFSQAAAHGHRNVFRKLLAQPEKEKSDILSLEEILAEGTDLAETAPPPLCASRNSKAKLRALREAMYHSAEHGYVDVTIDIRSIGVPWTLHTWLESLRIAFQQHRRPLIQCLLKEFKTIQEEEYTEELVTQGLPLMFEILKASKNEVISQQLCVIFTHCYGPYPIPKLTEIKRKQTSRLDPHFLNNKEMSDVTFLVEGRPFYAHKVLLFTASPRFKALLSSKPTNDNTCIEIGYVKYPIFQLVMQYLYYGGPESLLIKNNEIMELLSAAKFFQLEALQRHCEIICAKSINTDNCVDIYSHAKFLGVTELSAYCEGYFLKNMMVLIENEAFKQLLYDKNGEGAGQDVLQDLQRTLAIRIQSIHLSSSKGSVV.

A helical transmembrane segment spans residues 168–188 (IVLSWGLAAHCTAAALAALSL). Residues 260–302 (SCSGPGPGSSSGSGPGPGSGPGAPAADKERETPGGGAASGGPC) form a disordered region. Gly residues predominate over residues 264-280 (PGPGSSSGSGPGPGSGP). ANK repeat units lie at residues 608 to 637 (QGMT…DLNV), 654 to 683 (RHWT…KVEG), 692 to 721 (YSET…DPLI), 735 to 764 (GDMN…KEKS), and 830 to 859 (TWLE…TIQE). Positions 928-994 (SDVTFLVEGR…LYYGGPESLL (67 aa)) constitute a BTB domain.

Its subcellular location is the membrane. The polypeptide is Ankyrin repeat- and BTB/POZ domain-containing protein 3 (Abtb3) (Mus musculus (Mouse)).